The sequence spans 416 residues: Gap junction alpha-3 protein (416 aa).

An intramembrane segment occupies 2–15; it reads GDWSFLGRLLENAQ. The Cytoplasmic portion of the chain corresponds to 16-19; sequence EHST. The chain crosses the membrane as a helical span at residues 20-40; sequence VIGKVWLTVLFIFRILVLGAA. Residues 41-71 lie on the Extracellular side of the membrane; the sequence is AEEVWGDEQSDFTCNTQQPGCENVCYDRAFP. Disulfide bonds link Cys-54–Cys-198, Cys-61–Cys-192, and Cys-65–Cys-187. A helical transmembrane segment spans residues 72-92; sequence ISHIRFWALQIIFVSTPTLIY. At 93–158 the chain is on the cytoplasmic side; it reads LGHVLHIVRM…GALLRTYVFN (66 aa). The span at 110 to 128 shows a compositional bias: basic and acidic residues; that stretch reads EEELLRRDNPQHGRGREPM. A disordered region spans residues 110-141; it reads EEELLRRDNPQHGRGREPMRTGSPRDPPLRDD. Residues 159–179 traverse the membrane as a helical segment; that stretch reads IIFKTLFEVGFIAGQYFLYGF. The Extracellular portion of the chain corresponds to 180–207; that stretch reads QLQPLYRCDRWPCPNTVDCFISRPTEKT. Residues 208 to 228 form a helical membrane-spanning segment; that stretch reads IFVIFMLAVACASLVLNMLEI. Residues 229 to 416 lie on the Cytoplasmic side of the membrane; that stretch reads YHLGWKKLKQ…GRARPGDLAI (188 aa). The tract at residues 336–416 is disordered; the sequence is GAEPQTPASK…GRARPGDLAI (81 aa). The segment covering 342–353 has biased composition (low complexity); that stretch reads PASKPSSAASSP.

Belongs to the connexin family. Alpha-type (group II) subfamily. In terms of assembly, a hemichannel or connexon is composed of a hexamer of connexins. A functional gap junction is formed by the apposition of two hemichannels. Forms heteromeric channels with GJA8. As to expression, detected in eye lens (at protein level). Most abundant in lens, but also present in heart and kidney.

The protein localises to the cell membrane. Its subcellular location is the cell junction. The protein resides in the gap junction. Structural component of lens fiber gap junctions. Gap junctions are dodecameric channels that connect the cytoplasm of adjoining cells. They are formed by the docking of two hexameric hemichannels, one from each cell membrane. Small molecules and ions diffuse from one cell to a neighboring cell via the central pore. This Rattus norvegicus (Rat) protein is Gap junction alpha-3 protein (Gja3).